The sequence spans 382 residues: MRGAYYVTIALLVVASSQISAEFGHQLQAYDHDVTAADDAVAETLAKRSLRGSRDVSNDVAIEERTKYSNVIEDGIEMLLRAAEALKEMPRAAVAVKDMPRAEEAVEKMAPIAEQDLLKNVIGADEASKRRRAPHGISTQRTLALPFKEWNTELKQMRGGSVLKKYRSKIKSVHQAFVDLCDKDLNPTVTETALLWGMFDWDVKSYSASAHKHNLIRLAKRYVHKDVVQIQSDDLAWNRWNEVSIPLRIGALNILLNLHYQRWVRMYNIFEQYQSALIGTPVSLELSLGGTTGTSSATALDKHLEVPMNKASTSKGKSSVFTRSSKRAFDSKTGTTSPSSKHSKMQRSSSPLTESTTSGDDPVFTKRSRHGVAVTSLSSISN.

The signal sequence occupies residues Met-1–Ala-21. Positions Arg-48–Arg-65 match the RxLR-dEER motif. The interval Met-308–Asn-382 is disordered. Residues Lys-310–Arg-323 are compositionally biased toward polar residues.

This sequence belongs to the RxLR effector family.

It is found in the secreted. Its subcellular location is the host nucleus. In terms of biological role, secreted effector that completely suppresses the host cell death induced by cell death-inducing proteins. In Plasmopara viticola (Downy mildew of grapevine), this protein is Secreted RxLR effector protein 118.